The following is a 290-amino-acid chain: MSFVAYEELIKEGDTAILSLGHGSMVAVRVQRGAQTQTRHGVLRHSVDLIGRPFGSKVTCSRGGWVYVLHPTPELWTVNLPHRTQILYSTDIALITMMLELRPGSVVCESGTGSGSVSHAIIRSIAPTGHLHTVEFHQQRADKAREEFQQHRVSQWVTVHTQDVCRSGFGVVHVADAVFLDIPSPWEAVGHAWDALKVEGGRFCSFSPCIEQVQRTCQALAAHGFTELSTLEVLPQVYNVRTVSLPLPDLGADDLEGNVGSDATPFRSGTPMKETVGHTGYLTFATKTPG.

Serine 2 carries the N-acetylserine modification. 5 substrate regions span residues 20 to 22, 35 to 42, 64 to 65, 85 to 89, and 110 to 117; these read LGH, QTQTRHGV, GW, QILYS, and SGTGSGSV. Residues leucine 87, 114–116, glutamate 135, arginine 140, 163–164, and aspartate 181 each bind S-adenosyl-L-methionine; these read SGS and DV. 2 substrate regions span residues 180 to 183 and 205 to 212; these read LDIP and SFSPCIEQ. Residue threonine 279 participates in substrate binding.

Belongs to the class I-like SAM-binding methyltransferase superfamily. TRM61 family. Heterotetramer; composed of two copies of TRMT6 and two copies of TRMT61A.

It is found in the nucleus. The catalysed reaction is adenosine(58) in tRNA + S-adenosyl-L-methionine = N(1)-methyladenosine(58) in tRNA + S-adenosyl-L-homocysteine + H(+). It carries out the reaction an adenosine in mRNA + S-adenosyl-L-methionine = an N(1)-methyladenosine in mRNA + S-adenosyl-L-homocysteine + H(+). Its function is as follows. Catalytic subunit of tRNA (adenine-N(1)-)-methyltransferase, which catalyzes the formation of N(1)-methyladenine at position 58 (m1A58) in initiator methionyl-tRNA. Catalytic subunit of mRNA N(1)-methyltransferase complex, which mediates methylation of adenosine residues at the N(1) position of a small subset of mRNAs: N(1) methylation takes place in tRNA T-loop-like structures of mRNAs and is only present at low stoichiometries. This Rattus norvegicus (Rat) protein is tRNA (adenine(58)-N(1))-methyltransferase catalytic subunit TRMT61A (Trmt61a).